A 698-amino-acid chain; its full sequence is Serotransferrin (698 aa).

Residues 1 to 19 (MRLAVGALLVCAVLGLCLA) form the signal peptide. Transferrin-like domains follow at residues 25-347 (VRWC…NLRE) and 361-683 (VKWC…NLRK). 2 cysteine pairs are disulfide-bonded: cysteine 28-cysteine 67 and cysteine 38-cysteine 58. Arginine 42 carries the post-translational modification Dimethylated arginine. A glycan (O-linked (GalNAc...) serine) is linked at serine 51. The Fe(3+) site is built by aspartate 82 and tyrosine 114. Disulfide bonds link cysteine 137-cysteine 213, cysteine 156-cysteine 350, cysteine 177-cysteine 193, cysteine 180-cysteine 196, cysteine 190-cysteine 198, cysteine 246-cysteine 260, cysteine 358-cysteine 615, cysteine 364-cysteine 396, cysteine 374-cysteine 387, cysteine 421-cysteine 693, cysteine 437-cysteine 656, cysteine 469-cysteine 542, cysteine 493-cysteine 684, cysteine 503-cysteine 517, cysteine 514-cysteine 525, cysteine 582-cysteine 596, and cysteine 634-cysteine 639. Residues threonine 139, arginine 143, alanine 145, and glycine 146 each coordinate hydrogencarbonate. A Fe(3+)-binding site is contributed by tyrosine 207. Position 268 (histidine 268) interacts with Fe(3+). The residue at position 389 (serine 389) is a Phosphoserine. 2 residues coordinate Fe(3+): aspartate 411 and tyrosine 445. Hydrogencarbonate-binding residues include threonine 471, arginine 475, alanine 477, and glycine 478. A Fe(3+)-binding site is contributed by tyrosine 536. Histidine 604 serves as a coordination point for Fe(3+). N-linked (GlcNAc...) asparagine glycosylation is present at asparagine 630. Serine 685 is subject to Phosphoserine.

It belongs to the transferrin family. Monomer. Part of a complex composed of SLC40A1/ferroportin, TF/transferrin and HEPH/hephaestin that transfers iron from cells to transferrin. In terms of tissue distribution, expressed by the liver and secreted in plasma.

The protein localises to the secreted. Transferrins are iron binding transport proteins which can bind two Fe(3+) ions in association with the binding of an anion, usually bicarbonate. It is responsible for the transport of iron from sites of absorption and heme degradation to those of storage and utilization. Serum transferrin may also have a further role in stimulating cell proliferation. The sequence is that of Serotransferrin (TF) from Pan troglodytes (Chimpanzee).